We begin with the raw amino-acid sequence, 511 residues long: MEKLLALIVVLVILLSLALFYLCNILWLRAVKIRKKLRRQGIRGPKPTFLYGNTKEIKRIRQELKLSQKQGTNNFISTLFPHFLLWRETYGPVFLYSTGAMEILQVSHPDMVKDIGRWTPSELGKPNYLKKSRKALFGGGLFTENGDEWAYQRKIIAPEFFMDKIKGMIQLIEDATVPVLEAWEDMIDDEGGCREIVVDDYLRNLSADVIARACFGSSFTKGEEIFCKLRQLQKAIARQDSFVGLSALWKYLPTKSSQEIQMLDEQVRLLILDVAKEQHHYQDSHNSLVNAIIDGAQDGRSAAEAEDFIVGNCKTIYFGGHESTAVTAIWCLMLLATHPEWQERARAEAMEVCRGRSTLDVDALRRLKIVTMVIQETLRLYPPASVMMREALTDVKLGSIEVPRGTIVQVPRLMLHLDKEAWGADADEFRPDRFANGVAAACRAAHMYVPFGHGPRTCIGQNLAMAELKVVLARLLTKFAFSPSPRYRHSPAFRLTIEPGFGLPLMVTKLP.

Topologically, residues 1-6 (MEKLLA) are lumenal. A helical; Signal-anchor for type III membrane protein membrane pass occupies residues 7-27 (LIVVLVILLSLALFYLCNILW). Topologically, residues 28-511 (LRAVKIRKKL…GLPLMVTKLP (484 aa)) are cytoplasmic. Cysteine 458 lines the heme pocket.

It belongs to the cytochrome P450 family. Heme serves as cofactor.

The protein resides in the membrane. This chain is Cytochrome P450 714C3 (CYP714C3), found in Oryza sativa subsp. japonica (Rice).